Consider the following 177-residue polypeptide: Large ribosomal subunit protein uL6 (177 aa).

Belongs to the universal ribosomal protein uL6 family. As to quaternary structure, part of the 50S ribosomal subunit.

This protein binds to the 23S rRNA, and is important in its secondary structure. It is located near the subunit interface in the base of the L7/L12 stalk, and near the tRNA binding site of the peptidyltransferase center. This Salmonella dublin (strain CT_02021853) protein is Large ribosomal subunit protein uL6.